Consider the following 411-residue polypeptide: Short chain dehydrogenase ausT (411 aa).

The NADP(+) site is built by Asp105, Gln137, Tyr249, and Arg253. Tyr249 (proton donor) is an active-site residue. Tyr263 acts as the Proton donor in catalysis.

It belongs to the short-chain dehydrogenases/reductases (SDR) family.

Its pathway is secondary metabolite biosynthesis; terpenoid biosynthesis. Its function is as follows. Short chain dehydrogenase; part of the gene cluster that mediates the biosynthesis of calidodehydroaustin, a fungal meroterpenoid. The first step of the pathway is the synthesis of 3,5-dimethylorsellinic acid by the polyketide synthase ausA. 3,5-dimethylorsellinic acid is then prenylated by the polyprenyl transferase ausN. Further epoxidation by the FAD-dependent monooxygenase ausM and cyclization by the probable terpene cyclase ausL lead to the formation of protoaustinoid A. Protoaustinoid A is then oxidized to spiro-lactone preaustinoid A3 by the combined action of the FAD-binding monooxygenases ausB and ausC, and the dioxygenase ausE. Acid-catalyzed keto-rearrangement and ring contraction of the tetraketide portion of preaustinoid A3 by ausJ lead to the formation of preaustinoid A4. The aldo-keto reductase ausK, with the help of ausH, is involved in the next step by transforming preaustinoid A4 into isoaustinone which is in turn hydroxylated by the P450 monooxygenase ausI to form austinolide. The cytochrome P450 monooxygenase ausG modifies austinolide to austinol. Austinol is further acetylated to austin by the O-acetyltransferase ausP, which spontaneously changes to dehydroaustin. The cytochrome P450 monooxygenase ausR then converts dehydroaustin is into 7-dehydrodehydroaustin. The hydroxylation catalyzed by ausR permits the O-acetyltransferase ausQ to add an additional acetyl group to the molecule, leading to the formation of acetoxydehydroaustin. The short chain dehydrogenase ausT catalyzes the reduction of the double bond present between carbon atoms 1 and 2 to convert 7-dehydrodehydroaustin into 1,2-dihydro-7-hydroxydehydroaustin. AusQ catalyzes not only an acetylation reaction but also the addition of the PKS ausV diketide product to 1,2-dihydro-7-hydroxydehydroaustin, forming precalidodehydroaustin. Finally, the iron/alpha-ketoglutarate-dependent dioxygenase converts precalidodehydroaustin into calidodehydroaustin. The protein is Short chain dehydrogenase ausT of Aspergillus calidoustus.